A 533-amino-acid chain; its full sequence is Adenosine deaminase (533 aa).

The signal sequence occupies residues 1–19; that stretch reads MKILLAVVFVLNLTNLAVP.

Belongs to the metallo-dependent hydrolases superfamily. Adenosine and AMP deaminases family. ADGF subfamily. It depends on Zn(2+) as a cofactor. In terms of processing, proteolytically cleaved by human mast cell tryptase and chymase. In terms of tissue distribution, female salivary gland (at protein level).

It is found in the secreted. It catalyses the reaction adenosine + H2O + H(+) = inosine + NH4(+). The enzyme catalyses 2'-deoxyadenosine + H2O + H(+) = 2'-deoxyinosine + NH4(+). Catalyzes the deamination of adenosine to inosine and deoxyadenosine to deoxyinosine. Induces degranulation of host mast cells, and secretion of tryptase and IL6. Modulates enzymatic activities of human tryptase and chymase. Induces release of cytokines, such as IL1B, IL6, TNF, CCL2, IFN-beta (INFB1) and ISG15, from host monocytes and macrophages. Activates host NF-kappa-B signaling pathway in TAK1/MAP3K7-dependent manner. Functionally, (Microbial infection) Promotes replication of dengue virus type 2 in host cells probably via modulation of cytokine production in host macrophages and monocytes. The polypeptide is Adenosine deaminase (Aedes albopictus (Asian tiger mosquito)).